The chain runs to 117 residues: Hydrogenase maturation factor HypA (117 aa).

H2 contributes to the Ni(2+) binding site. Positions 73, 76, 90, and 93 each coordinate Zn(2+).

Belongs to the HypA/HybF family.

In terms of biological role, involved in the maturation of [NiFe] hydrogenases. Required for nickel insertion into the metal center of the hydrogenase. This chain is Hydrogenase maturation factor HypA, found in Pectobacterium atrosepticum (strain SCRI 1043 / ATCC BAA-672) (Erwinia carotovora subsp. atroseptica).